An 81-amino-acid polypeptide reads, in one-letter code: MSTLGMMLLILLLLVPLATFADDGPTMRGHRSAKLLAHTTRDSCPSGTNCPSKICCNGNCCSKSSCRCETNQATKERVCVC.

The N-terminal stretch at 1 to 21 (MSTLGMMLLILLLLVPLATFA) is a signal peptide. Positions 22–31 (DDGPTMRGHR) are excised as a propeptide.

The protein belongs to the conotoxin N superfamily. Contains 5 disulfide bonds. Expressed by the venom duct.

Its subcellular location is the secreted. Its function is as follows. Probable neurotoxin. The sequence is that of Conotoxin Im016 from Conus imperialis (Imperial cone).